The sequence spans 97 residues: Essential MCU regulator, mitochondrial (97 aa).

A mitochondrion-targeting transit peptide spans M1–M35. A helical membrane pass occupies residues P53–I73.

It belongs to the SMDT1/EMRE family.

The protein resides in the mitochondrion inner membrane. Functionally, essential regulatory subunit of the mitochondrial calcium uniporter MCU channel, a protein that mediates calcium uptake into mitochondria. The protein is Essential MCU regulator, mitochondrial of Drosophila melanogaster (Fruit fly).